Reading from the N-terminus, the 923-residue chain is Transportin-3 (923 aa).

Methionine 1 carries the N-acetylmethionine modification. Serine 74 is modified (phosphoserine). Residues histidine 242 and threonine 896 each carry the phosphothreonine modification.

In terms of assembly, interacts with (GTP-bound) Ran. Interacts with (phosphorylated) SFRS1 and SFRS2; leading to their nuclear import. Interacts with NUP62. Interacts with RBM4. Interacts with CPSF6, promoting its nuclear import.

Its subcellular location is the nucleus envelope. The protein resides in the cytoplasm. Importin, which transports target proteins into the nucleus. Specifically mediates the nuclear import of splicing factor serine/arginine (SR) proteins, such as RBM4, SFRS1 and SFRS2, by recognizing phosphorylated SR domains. Also mediates the nuclear import of serine/arginine (SR) protein CPSF6, independently of CPSF6 phosphorylation. The nuclear import process is regulated by the small GTPase Ran that partitions between cytoplasm and nucleus in the predominantly GDP- and GTP-bound form, respectively. Importin associates with target cargo proteins in the cytoplasm, and the competitive binding of GTP-bound Ran induces the release of cargos in the nucleus. This is Transportin-3 from Mus musculus (Mouse).